The primary structure comprises 186 residues: dCTP deaminase (186 aa).

107–112 (KSTYAR) contacts dCTP. E133 acts as the Proton donor/acceptor in catalysis. DCTP-binding residues include Q152, Y166, and Q176.

The protein belongs to the dCTP deaminase family. Homotrimer.

It carries out the reaction dCTP + H2O + H(+) = dUTP + NH4(+). It participates in pyrimidine metabolism; dUMP biosynthesis; dUMP from dCTP (dUTP route): step 1/2. Catalyzes the deamination of dCTP to dUTP. This chain is dCTP deaminase, found in Campylobacter jejuni (strain RM1221).